We begin with the raw amino-acid sequence, 206 residues long: Large ribosomal subunit protein uL4 (206 aa).

Residues 46–77 form a disordered region; sequence GTRAQKDREQVRHSTKKPFKQKGTGRARAGMT. Basic residues predominate over residues 58–70; it reads HSTKKPFKQKGTG.

It belongs to the universal ribosomal protein uL4 family. Part of the 50S ribosomal subunit.

In terms of biological role, one of the primary rRNA binding proteins, this protein initially binds near the 5'-end of the 23S rRNA. It is important during the early stages of 50S assembly. It makes multiple contacts with different domains of the 23S rRNA in the assembled 50S subunit and ribosome. Functionally, forms part of the polypeptide exit tunnel. The polypeptide is Large ribosomal subunit protein uL4 (Polaromonas sp. (strain JS666 / ATCC BAA-500)).